A 165-amino-acid polypeptide reads, in one-letter code: 2-C-methyl-D-erythritol 2,4-cyclodiphosphate synthase (165 aa).

2 residues coordinate a divalent metal cation: aspartate 12 and histidine 14. 4-CDP-2-C-methyl-D-erythritol 2-phosphate-binding positions include 12–14 and 38–39; these read DIH and HS. Position 46 (histidine 46) interacts with a divalent metal cation. 4-CDP-2-C-methyl-D-erythritol 2-phosphate-binding positions include 60 to 62, 136 to 139, and arginine 146; these read DIG and TTNE.

It belongs to the IspF family. Homotrimer. A divalent metal cation serves as cofactor.

The enzyme catalyses 4-CDP-2-C-methyl-D-erythritol 2-phosphate = 2-C-methyl-D-erythritol 2,4-cyclic diphosphate + CMP. It participates in isoprenoid biosynthesis; isopentenyl diphosphate biosynthesis via DXP pathway; isopentenyl diphosphate from 1-deoxy-D-xylulose 5-phosphate: step 4/6. Functionally, involved in the biosynthesis of isopentenyl diphosphate (IPP) and dimethylallyl diphosphate (DMAPP), two major building blocks of isoprenoid compounds. Catalyzes the conversion of 4-diphosphocytidyl-2-C-methyl-D-erythritol 2-phosphate (CDP-ME2P) to 2-C-methyl-D-erythritol 2,4-cyclodiphosphate (ME-CPP) with a corresponding release of cytidine 5-monophosphate (CMP). The protein is 2-C-methyl-D-erythritol 2,4-cyclodiphosphate synthase of Nostoc sp. (strain PCC 7120 / SAG 25.82 / UTEX 2576).